We begin with the raw amino-acid sequence, 235 residues long: Proteasome subunit alpha type-2-B (235 aa).

Residue lysine 64 forms a Glycyl lysine isopeptide (Lys-Gly) (interchain with G-Cter in ubiquitin) linkage.

This sequence belongs to the peptidase T1A family. Component of the 20S core complex of the 26S proteasome. The 26S proteasome is composed of a core protease (CP), known as the 20S proteasome, capped at one or both ends by the 19S regulatory particle (RP/PA700). The 20S proteasome core is composed of 28 subunits that are arranged in four stacked rings, resulting in a barrel-shaped structure. The two end rings are each formed by seven alpha subunits, and the two central rings are each formed by seven beta subunits. The catalytic chamber with the active sites is on the inside of the barrel.

It is found in the cytoplasm. The protein resides in the nucleus. In terms of biological role, the proteasome is a multicatalytic proteinase complex which is characterized by its ability to cleave peptides with Arg, Phe, Tyr, Leu, and Glu adjacent to the leaving group at neutral or slightly basic pH. The proteasome has an ATP-dependent proteolytic activity. This chain is Proteasome subunit alpha type-2-B (PAB2), found in Arabidopsis thaliana (Mouse-ear cress).